A 536-amino-acid chain; its full sequence is CTP synthase (536 aa).

The tract at residues 1-267 (MSKFVFVTGG…CKQTLNCLEL (267 aa)) is amidoligase domain. S13 contributes to the CTP binding site. Residue S13 participates in UTP binding. Residues 14–19 (SIGKGI) and D71 contribute to the ATP site. Mg(2+) is bound by residues D71 and E141. CTP-binding positions include 148-150 (DIE), 188-193 (KTKPTQ), and K224. UTP contacts are provided by residues 188-193 (KTKPTQ) and K224. One can recognise a Glutamine amidotransferase type-1 domain in the interval 292–534 (KVALVGKYIE…IKASQEKLEQ (243 aa)). G354 lines the L-glutamine pocket. C381 functions as the Nucleophile; for glutamine hydrolysis in the catalytic mechanism. L-glutamine contacts are provided by residues 382–385 (LGMQ), E405, and R462. Active-site residues include H507 and E509.

The protein belongs to the CTP synthase family. Homotetramer.

It carries out the reaction UTP + L-glutamine + ATP + H2O = CTP + L-glutamate + ADP + phosphate + 2 H(+). The enzyme catalyses L-glutamine + H2O = L-glutamate + NH4(+). It catalyses the reaction UTP + NH4(+) + ATP = CTP + ADP + phosphate + 2 H(+). Its pathway is pyrimidine metabolism; CTP biosynthesis via de novo pathway; CTP from UDP: step 2/2. Its activity is regulated as follows. Allosterically activated by GTP, when glutamine is the substrate; GTP has no effect on the reaction when ammonia is the substrate. The allosteric effector GTP functions by stabilizing the protein conformation that binds the tetrahedral intermediate(s) formed during glutamine hydrolysis. Inhibited by the product CTP, via allosteric rather than competitive inhibition. Its function is as follows. Catalyzes the ATP-dependent amination of UTP to CTP with either L-glutamine or ammonia as the source of nitrogen. Regulates intracellular CTP levels through interactions with the four ribonucleotide triphosphates. This is CTP synthase from Prochlorococcus marinus subsp. pastoris (strain CCMP1986 / NIES-2087 / MED4).